The primary structure comprises 118 residues: Large ribosomal subunit protein uL24 (118 aa).

Belongs to the universal ribosomal protein uL24 family. Part of the 50S ribosomal subunit.

Functionally, one of two assembly initiator proteins, it binds directly to the 5'-end of the 23S rRNA, where it nucleates assembly of the 50S subunit. Its function is as follows. One of the proteins that surrounds the polypeptide exit tunnel on the outside of the subunit. This is Large ribosomal subunit protein uL24 from Prochlorococcus marinus (strain MIT 9515).